Here is a 156-residue protein sequence, read N- to C-terminus: Histidine-containing phosphotransfer protein 2 (156 aa).

Met1 carries the N-acetylmethionine modification. Positions 40–147 (SPDFVSEVLS…NLEKQIIQAG (108 aa)) constitute an HPt domain. His82 carries the post-translational modification Phosphohistidine.

Interacts with the B-type response regulators ARR1, ARR2 and ARR10. Binds to AHK1, AHK2, AHK3, AHK4, AHK5, ETR1 and CKI1. In terms of processing, two-component system major event consists of a His-to-Asp phosphorelay between a sensor histidine kinase (HK) and a response regulator (RR). In plants, the His-to-Asp phosphorelay involves an additional intermediate named Histidine-containing phosphotransfer protein (HPt). This multistep phosphorelay consists of a His-Asp-His-Asp sequential transfer of a phosphate group between first a His and an Asp of the HK protein, followed by the transfer to a conserved His of the HPt protein and finally the transfer to an Asp in the receiver domain of the RR protein. Strongly expressed in flowers and roots. Detected also in leaves, siliques and stems.

Its subcellular location is the cytoplasm. It localises to the cytosol. The protein localises to the nucleus. In terms of biological role, functions as a two-component phosphorelay mediators between cytokinin sensor histidine kinases and response regulator (B-type ARRs). Plays an important role in propagating cytokinin signal transduction through the multistep His-to-Asp phosphorelay. This is Histidine-containing phosphotransfer protein 2 (AHP2) from Arabidopsis thaliana (Mouse-ear cress).